Consider the following 205-residue polypeptide: High frequency lysogenization protein HflD homolog (205 aa).

This sequence belongs to the HflD family.

Its subcellular location is the cytoplasm. It is found in the cell inner membrane. The chain is High frequency lysogenization protein HflD homolog from Vibrio vulnificus (strain CMCP6).